Reading from the N-terminus, the 132-residue chain is Fluoride-specific ion channel FluC 2 (132 aa).

4 consecutive transmembrane segments (helical) span residues 8–28, 41–61, 66–86, and 96–116; these read LQLE…GALL, LLVN…PAAP, LLGI…LAAV, and AALG…ALGF. The Na(+) site is built by Gly-73 and Thr-76.

This sequence belongs to the fluoride channel Fluc/FEX (TC 1.A.43) family.

It localises to the cell inner membrane. The enzyme catalyses fluoride(in) = fluoride(out). Na(+) is not transported, but it plays an essential structural role and its presence is essential for fluoride channel function. Its function is as follows. Fluoride-specific ion channel. Important for reducing fluoride concentration in the cell, thus reducing its toxicity. This is Fluoride-specific ion channel FluC 2 from Synechococcus sp. (strain CC9605).